A 729-amino-acid chain; its full sequence is Beta-galactosidase 4 (729 aa).

The first 35 residues, 1 to 35, serve as a signal peptide directing secretion; that stretch reads MAPAPTPAAAAGRRVAVLAAALVAASLAASVGVAN. Catalysis depends on E194, which acts as the Proton donor. The active-site Nucleophile is E263.

The protein belongs to the glycosyl hydrolase 35 family.

It localises to the secreted. The protein localises to the extracellular space. The protein resides in the apoplast. It catalyses the reaction Hydrolysis of terminal non-reducing beta-D-galactose residues in beta-D-galactosides.. In Oryza sativa subsp. japonica (Rice), this protein is Beta-galactosidase 4.